The following is a 225-amino-acid chain: uncharacterized protein (225 aa).

An N-terminal signal peptide occupies residues 1–21 (MSLHYYLFIFWILAFVQFSHA).

As to expression, prismatic layer of shell (at protein level).

The protein resides in the secreted. This is an uncharacterized protein from Margaritifera margaritifera (Freshwater pearl mussel).